Reading from the N-terminus, the 210-residue chain is Protein PF1979 (210 aa).

Residues 7 to 201 form the AMMECR1 domain; sequence EWGEFLVRLA…EEYPRGPVKR (195 aa).

This is Protein PF1979 from Pyrococcus furiosus (strain ATCC 43587 / DSM 3638 / JCM 8422 / Vc1).